A 114-amino-acid chain; its full sequence is Iron-sulfur cluster insertion protein ErpA (114 aa).

Iron-sulfur cluster is bound by residues Cys-42, Cys-106, and Cys-108.

The protein belongs to the HesB/IscA family. In terms of assembly, homodimer. Iron-sulfur cluster serves as cofactor.

Functionally, required for insertion of 4Fe-4S clusters for at least IspG. The polypeptide is Iron-sulfur cluster insertion protein ErpA (Wigglesworthia glossinidia brevipalpis).